The chain runs to 344 residues: GPALPP motifs-containing protein 1 (344 aa).

Residues 1–309 (MARDLIGPAL…QERIPFDRDK (309 aa)) form a disordered region. Ala2 carries the post-translational modification N-acetylalanine. The short motif at 7–12 (GPALPP) is the GPALPP motif 1 element. A Phosphoserine modification is found at Ser28. A GPALPP motif 2 motif is present at residues 30–35 (GPALPP). Composition is skewed to acidic residues over residues 58 to 67 (GNQESEEDDT) and 80 to 93 (DDND…DDDG). Positions 96-101 (GPALPP) match the GPALPP motif 3 motif. Ser109 is subject to Phosphoserine. Positions 111–120 (PRPIIGPALP) are enriched in pro residues. Residues 116-121 (GPALPP) carry the GPALPP motif 4 motif. A compositionally biased stretch (basic and acidic residues) spans 128 to 137 (QKSDKGRDDP). Thr142 carries the post-translational modification Phosphothreonine. 2 positions are modified to phosphoserine: Ser144 and Ser145. Basic and acidic residues-rich tracts occupy residues 167-191 (EFEK…KPIV), 231-265 (PADR…KRLA), 273-283 (ESKRSESLMDI), and 291-309 (KAAE…DRDK). A Glycyl lysine isopeptide (Lys-Gly) (interchain with G-Cter in SUMO2) cross-link involves residue Lys275. Lys312 is covalently cross-linked (Glycyl lysine isopeptide (Lys-Gly) (interchain with G-Cter in SUMO2)).

The protein is GPALPP motifs-containing protein 1 (GPALPP1) of Pongo abelii (Sumatran orangutan).